A 336-amino-acid polypeptide reads, in one-letter code: Serpentine receptor class delta-51 (336 aa).

A run of 7 helical transmembrane segments spans residues 14–34 (VYYS…LFIM), 48–68 (YLFN…FAQC), 93–113 (CFVT…SILL), 133–153 (ATTF…QLLT), 188–208 (AAII…LIAF), 237–257 (GLLI…SYFL), and 275–295 (IFGS…VLPY).

The protein belongs to the nematode receptor-like protein srd family.

Its subcellular location is the membrane. The chain is Serpentine receptor class delta-51 (srd-51) from Caenorhabditis elegans.